A 116-amino-acid chain; its full sequence is Large ribosomal subunit protein uL18 (116 aa).

It belongs to the universal ribosomal protein uL18 family. In terms of assembly, part of the 50S ribosomal subunit; part of the 5S rRNA/L5/L18/L25 subcomplex. Contacts the 5S and 23S rRNAs.

Functionally, this is one of the proteins that bind and probably mediate the attachment of the 5S RNA into the large ribosomal subunit, where it forms part of the central protuberance. This Shewanella sediminis (strain HAW-EB3) protein is Large ribosomal subunit protein uL18.